A 92-amino-acid polypeptide reads, in one-letter code: Putative septation protein SpoVG (92 aa).

This sequence belongs to the SpoVG family.

Its function is as follows. Could be involved in septation. This chain is Putative septation protein SpoVG, found in Thermoanaerobacter pseudethanolicus (strain ATCC 33223 / 39E) (Clostridium thermohydrosulfuricum).